Consider the following 143-residue polypeptide: Cofilin (143 aa).

Position 4 is a phosphoserine (Ser4). The ADF-H domain occupies 5-137 (GVAVADESLT…SYDSVLERVS (133 aa)).

This sequence belongs to the actin-binding proteins ADF family. As to quaternary structure, interacts with actin and AIP1 in a ternary complex. Post-translationally, the N-terminus is blocked.

The protein resides in the cytoplasm. It is found in the cytoskeleton. Its subcellular location is the nucleus matrix. Controls reversibly actin polymerization and depolymerization in a pH-sensitive manner. It has the ability to bind G- and F-actin in a 1:1 ratio of cofilin to actin. Binding to F-actin is regulated by tropomyosin. It is the major component of intranuclear and cytoplasmic actin rods. Required for accumulation of actin at the cell division site via depolymerizing actin at the cell ends. In association with myosin II has a role in the assembly of the contractile ring via severing actin filaments. Involved in the maintenance of the contractile ring once formed. In association with profilin and capping protein, has a role in the mitotic reorganization of the actin cytoskeleton. In effect, yeast cofilin increases the rate of actin polymerization by making new ends available for actin subunit addition. Such a protein complex is important for the polarized growth of yeast cells. The sequence is that of Cofilin (COF1) from Saccharomyces cerevisiae (strain ATCC 204508 / S288c) (Baker's yeast).